The sequence spans 208 residues: Large ribosomal subunit protein uL3 (208 aa).

At Q149 the chain carries N5-methylglutamine.

Belongs to the universal ribosomal protein uL3 family. As to quaternary structure, part of the 50S ribosomal subunit. Forms a cluster with proteins L14 and L19. Methylated by PrmB.

In terms of biological role, one of the primary rRNA binding proteins, it binds directly near the 3'-end of the 23S rRNA, where it nucleates assembly of the 50S subunit. In Mannheimia succiniciproducens (strain KCTC 0769BP / MBEL55E), this protein is Large ribosomal subunit protein uL3.